A 463-amino-acid polypeptide reads, in one-letter code: Exodeoxyribonuclease 7 large subunit (463 aa).

The protein belongs to the XseA family. In terms of assembly, heterooligomer composed of large and small subunits.

It localises to the cytoplasm. It catalyses the reaction Exonucleolytic cleavage in either 5'- to 3'- or 3'- to 5'-direction to yield nucleoside 5'-phosphates.. Bidirectionally degrades single-stranded DNA into large acid-insoluble oligonucleotides, which are then degraded further into small acid-soluble oligonucleotides. The polypeptide is Exodeoxyribonuclease 7 large subunit (Klebsiella pneumoniae (strain 342)).